Here is a 161-residue protein sequence, read N- to C-terminus: SsrA-binding protein (161 aa).

The disordered stretch occupies residues 1–23 (MATKKNEQIKGRTDGLVAENRRS).

This sequence belongs to the SmpB family.

It localises to the cytoplasm. Its function is as follows. Required for rescue of stalled ribosomes mediated by trans-translation. Binds to transfer-messenger RNA (tmRNA), required for stable association of tmRNA with ribosomes. tmRNA and SmpB together mimic tRNA shape, replacing the anticodon stem-loop with SmpB. tmRNA is encoded by the ssrA gene; the 2 termini fold to resemble tRNA(Ala) and it encodes a 'tag peptide', a short internal open reading frame. During trans-translation Ala-aminoacylated tmRNA acts like a tRNA, entering the A-site of stalled ribosomes, displacing the stalled mRNA. The ribosome then switches to translate the ORF on the tmRNA; the nascent peptide is terminated with the 'tag peptide' encoded by the tmRNA and targeted for degradation. The ribosome is freed to recommence translation, which seems to be the essential function of trans-translation. This Hyphomonas neptunium (strain ATCC 15444) protein is SsrA-binding protein.